Reading from the N-terminus, the 721-residue chain is Catalase-peroxidase 1 (721 aa).

Positions tryptophan 98 to tyrosine 223 form a cross-link, tryptophyl-tyrosyl-methioninium (Trp-Tyr) (with M-249). Histidine 99 functions as the Proton acceptor in the catalytic mechanism. A cross-link (tryptophyl-tyrosyl-methioninium (Tyr-Met) (with W-98)) is located at residues tyrosine 223 to methionine 249. Histidine 264 provides a ligand contact to heme b.

This sequence belongs to the peroxidase family. Peroxidase/catalase subfamily. As to quaternary structure, homodimer or homotetramer. Requires heme b as cofactor. In terms of processing, formation of the three residue Trp-Tyr-Met cross-link is important for the catalase, but not the peroxidase activity of the enzyme.

The catalysed reaction is H2O2 + AH2 = A + 2 H2O. It catalyses the reaction 2 H2O2 = O2 + 2 H2O. Functionally, bifunctional enzyme with both catalase and broad-spectrum peroxidase activity. This is Catalase-peroxidase 1 from Legionella pneumophila (strain Paris).